The primary structure comprises 316 residues: ATP synthase gamma chain (316 aa).

This sequence belongs to the ATPase gamma chain family. In terms of assembly, F-type ATPases have 2 components, CF(1) - the catalytic core - and CF(0) - the membrane proton channel. CF(1) has five subunits: alpha(3), beta(3), gamma(1), delta(1), epsilon(1). CF(0) has three main subunits: a, b and c.

It is found in the cellular thylakoid membrane. Produces ATP from ADP in the presence of a proton gradient across the membrane. The gamma chain is believed to be important in regulating ATPase activity and the flow of protons through the CF(0) complex. The sequence is that of ATP synthase gamma chain from Prochlorococcus marinus (strain MIT 9215).